Consider the following 268-residue polypeptide: Probable histidine-binding protein (268 aa).

The N-terminal stretch at 1–20 is a signal peptide; the sequence is MNMKKWIAAALACSALALSA. Cys21 is lipidated: N-palmitoyl cysteine. Cys21 carries S-diacylglycerol cysteine lipidation.

This sequence belongs to the bacterial solute-binding protein 3 family.

It is found in the cell membrane. In terms of biological role, involved in histidine transport. This chain is Probable histidine-binding protein (hisJ), found in Neisseria gonorrhoeae.